The sequence spans 382 residues: D-galactonate dehydratase (382 aa).

Position 183 (D183) interacts with Mg(2+). H185 serves as the catalytic Proton donor. Positions 209 and 235 each coordinate Mg(2+). The active-site Proton acceptor is H285. Positions 361 to 382 (NENPPDWRNPVWRHSDGSIAEW) are disordered.

This sequence belongs to the mandelate racemase/muconate lactonizing enzyme family. GalD subfamily. Mg(2+) is required as a cofactor.

The catalysed reaction is D-galactonate = 2-dehydro-3-deoxy-D-galactonate + H2O. The protein operates within carbohydrate acid metabolism; D-galactonate degradation; D-glyceraldehyde 3-phosphate and pyruvate from D-galactonate: step 1/3. Its function is as follows. Catalyzes the dehydration of D-galactonate to 2-keto-3-deoxy-D-galactonate. In Xanthomonas euvesicatoria pv. vesicatoria (strain 85-10) (Xanthomonas campestris pv. vesicatoria), this protein is D-galactonate dehydratase.